Reading from the N-terminus, the 276-residue chain is MKAQILREMKVLTAIEPEFEVQRRVAFIKTKLKEARSKALVLGISGGVDSSTAGRLCQLAVDSLNHENSQGGYQFIAVRLPYQIQKDEHEAQLACQFIQPSKLVTVNVHQGVDGVHSATVAALAEAGLPLPDVAKVDFVKGNVKARMRMIAQYELAGLVGGLVVGTDHSAENITGFYTKWGDGACDLAPLFGLNKRQVRQLAAYLGAPESLVHKAPTADLEDNKPLLEDEVALGLTYAQIDDFLEGKDVGKAVEDKLIGIYKATQHKRQPIPTIYD.

43–50 is a binding site for ATP; the sequence is GISGGVDS. Asp49 contributes to the Mg(2+) binding site. A deamido-NAD(+)-binding site is contributed by Arg146. Position 166 (Thr166) interacts with ATP. Glu171 contacts Mg(2+). Deamido-NAD(+) contacts are provided by Lys179 and Asp186. Lys195 and Thr217 together coordinate ATP. 266-267 contacts deamido-NAD(+); the sequence is HK.

This sequence belongs to the NAD synthetase family. In terms of assembly, homodimer.

The enzyme catalyses deamido-NAD(+) + NH4(+) + ATP = AMP + diphosphate + NAD(+) + H(+). It functions in the pathway cofactor biosynthesis; NAD(+) biosynthesis; NAD(+) from deamido-NAD(+) (ammonia route): step 1/1. Functionally, catalyzes the ATP-dependent amidation of deamido-NAD to form NAD. Uses ammonia as a nitrogen source. This chain is NH(3)-dependent NAD(+) synthetase, found in Shewanella baltica (strain OS223).